The sequence spans 507 residues: Microcystinase C (507 aa).

Positions 1–21 (MLDRRTLMGGILSMAGSKATG) are cleaved as a signal peptide. Residues Asp-167, His-169, and His-191 each contribute to the Zn(2+) site.

The protein belongs to the peptidase M81 family. Zn(2+) is required as a cofactor.

Its activity is regulated as follows. Inhibited by the metal chelators EDTA and 1,10-phenanthroline. Its function is as follows. Involved in peptidolytic degradation of cyclic heptapeptide hepatotoxin microcystin (MC). Cleaves both linear MC and the tetrapeptide degradation product of MC. Cleaves the Adda-Glu peptide bond of linear MC heptapeptides. The chain is Microcystinase C from Sphingomonas sp.